A 125-amino-acid polypeptide reads, in one-letter code: UPF0593 mitochondrial protein C806.05 (125 aa).

This sequence belongs to the UPF0593 family.

It localises to the mitochondrion. The polypeptide is UPF0593 mitochondrial protein C806.05 (Schizosaccharomyces pombe (strain 972 / ATCC 24843) (Fission yeast)).